The chain runs to 376 residues: Cytochrome-c peroxidase IdrP1 (376 aa).

Positions 1–24 (MGHIRSIRLALAVAAVCTAASAAA) are cleaved as a signal peptide. Cytochrome c domains lie at 49–157 (DKVA…AAFK) and 203–354 (AEAQ…EALS). Heme c contacts are provided by Cys71, Cys74, His75, Cys218, Cys221, and His222.

The iodate reductase (Idr) complex is composed of a molybdopterin-dependent iodate reductase (IdrA and IdrB subunits) and two associated peroxidases (IdrP1 and IdrP2). Requires heme c as cofactor.

It is found in the periplasm. The enzyme catalyses 2 Fe(II)-[cytochrome c] + H2O2 + 2 H(+) = 2 Fe(III)-[cytochrome c] + 2 H2O. Involved in iodate respiration. May play a critical role in detoxification of inadvertent H(2)O(2) generated by the iodate reductase IdrA/IdrB. This chain is Cytochrome-c peroxidase IdrP1, found in Denitromonas iodatirespirans.